A 163-amino-acid chain; its full sequence is NADH-quinone oxidoreductase subunit I (163 aa).

4Fe-4S ferredoxin-type domains are found at residues 53 to 83 (LRRY…IEAG) and 94 to 123 (VRYD…EGPN). Positions 63, 66, 69, 73, 103, 106, 109, and 113 each coordinate [4Fe-4S] cluster.

The protein belongs to the complex I 23 kDa subunit family. NDH-1 is composed of 14 different subunits. Subunits NuoA, H, J, K, L, M, N constitute the membrane sector of the complex. [4Fe-4S] cluster is required as a cofactor.

The protein localises to the cell inner membrane. The catalysed reaction is a quinone + NADH + 5 H(+)(in) = a quinol + NAD(+) + 4 H(+)(out). Functionally, NDH-1 shuttles electrons from NADH, via FMN and iron-sulfur (Fe-S) centers, to quinones in the respiratory chain. The immediate electron acceptor for the enzyme in this species is believed to be ubiquinone. Couples the redox reaction to proton translocation (for every two electrons transferred, four hydrogen ions are translocated across the cytoplasmic membrane), and thus conserves the redox energy in a proton gradient. In Bartonella henselae (strain ATCC 49882 / DSM 28221 / CCUG 30454 / Houston 1) (Rochalimaea henselae), this protein is NADH-quinone oxidoreductase subunit I.